Here is a 173-residue protein sequence, read N- to C-terminus: uncharacterized protein (173 aa).

Residues 1-21 (MFIVFYLILIIFIFIYFHVYI) traverse the membrane as a helical segment.

This sequence to T.pallidum TP0711.

Its subcellular location is the membrane. This is an uncharacterized protein from Borreliella burgdorferi (strain ATCC 35210 / DSM 4680 / CIP 102532 / B31) (Borrelia burgdorferi).